The sequence spans 1129 residues: Ubiquitin carboxyl-terminal hydrolase 15 (1129 aa).

Positions 1–26 are disordered; the sequence is MVLSNVDAEEVNMDSSMELEESSQEP. The span at 7–23 shows a compositional bias: acidic residues; sequence DAEEVNMDSSMELEESS. In terms of domain architecture, MATH spans 51 to 204; the sequence is HASYSWVVKN…NDEICISVTV (154 aa). The USP domain occupies 230 to 545; the sequence is VGLKNQGATC…NAYMLVYFRK (316 aa). The active-site Nucleophile is C239. H481 acts as the Proton acceptor in catalysis.

The protein belongs to the peptidase C19 family.

The protein localises to the nucleus. The catalysed reaction is Thiol-dependent hydrolysis of ester, thioester, amide, peptide and isopeptide bonds formed by the C-terminal Gly of ubiquitin (a 76-residue protein attached to proteins as an intracellular targeting signal).. Hydrolase that deubiquitinates target proteins. Cleaves the UBL propeptide in sde2. Involved in regulating the steady-state levels of proteins including prp4. The protein is Ubiquitin carboxyl-terminal hydrolase 15 of Schizosaccharomyces pombe (strain 972 / ATCC 24843) (Fission yeast).